We begin with the raw amino-acid sequence, 410 residues long: Mitochondrial potassium channel (410 aa).

The transit peptide at 1 to 35 directs the protein to the mitochondrion; that stretch reads MTGCSPVFTMQQVVGVSHRLVWRTFRGTDLLMTRT. Over 36–201 the chain is Mitochondrial matrix; it reads LCSPGPSRPG…KERTRAERTK (166 aa). The stretch at 116–143 forms a coiled coil; that stretch reads VREAREDLEAQQTKLKEVRDRLDRVSRE. A helical transmembrane segment spans residues 202–222; it reads NWSLIGSVLGALIGVAGSTYV. Over 223–385 the chain is Mitochondrial intermembrane; it reads NRVRLQELKA…RLEAQANRNA (163 aa). A disordered region spans residues 276 to 296; it reads GQDQGSGSPTGPSSPRGKDID. Positions 280 to 290 are enriched in low complexity; that stretch reads GSGSPTGPSSP. A helical membrane pass occupies residues 386–406; sequence ISSTLVTCVTFMATLPLLYML. Residues 407–410 are Mitochondrial matrix-facing; that stretch reads FKTS.

The mitochondrial potassium channel (mitoK(ATP)) forms a heteromultimer.

The protein localises to the mitochondrion inner membrane. The catalysed reaction is K(+)(in) = K(+)(out). With respect to regulation, channel activity inhibited by ATP via ABCB8/MITOSUR subunit. Functionally, pore-forming subunit of the mitochondrial ATP-gated potassium channel (mitoK(ATP)). Together with ATP-binding subunit ABCB8/MITOSUR of the mitoK(ATP) channel, mediates ATP-dependent K(+) currents across the mitochondrial inner membrane. An increase in ATP intracellular levels closes the channel, inhibiting K(+) transport, whereas a decrease in ATP levels enhances K(+) uptake in the mitochondrial matrix. May contribute to the homeostatic control of cellular metabolism under stress conditions by regulating the mitochondrial matrix volume. The sequence is that of Mitochondrial potassium channel from Rattus norvegicus (Rat).